The following is an 81-amino-acid chain: uncharacterized protein (81 aa).

Residues Gly-11 to Gly-34 form a disordered region.

This is an uncharacterized protein from Dictyostelium discoideum (Social amoeba).